The chain runs to 523 residues: Putative glucosylceramidase 1 (523 aa).

The N-terminal stretch at 1-23 is a signal peptide; the sequence is MKSRFLLKIFIFLAVFGVDSVRA. An N-linked (GlcNAc...) asparagine glycan is attached at Asn-168. Residue Glu-358 is the Nucleophile of the active site.

It belongs to the glycosyl hydrolase 30 family.

The catalysed reaction is a beta-D-glucosylceramide + H2O = an N-acyl-sphingoid base + D-glucose. It catalyses the reaction a beta-D-glucosyl-(1&lt;-&gt;1')-N-acylsphing-4-enine + H2O = an N-acylsphing-4-enine + D-glucose. It carries out the reaction an N-acyl-1-beta-D-glucosyl-15-methylhexadecasphing-4-enine + H2O = an N-acyl-15-methylhexadecasphing-4-enine + D-glucose. It functions in the pathway lipid metabolism; sphingolipid metabolism. Its function is as follows. Glucosylceramidase that catalyzes the hydrolysis of glucosylceramides into free ceramides and glucose. C.elegans contains specific sphingoid bases, which are unique or different in structure compared to the sphingoid bases found in other animals. Two examples of these distinctive compounds are: 15-methylhexadecasphinganine and 15-methylhexadecasphing-4-enine. The polypeptide is Putative glucosylceramidase 1 (gba-1) (Caenorhabditis elegans).